We begin with the raw amino-acid sequence, 352 residues long: MRQIVSTFLFVTVVSGTIIVVSSENWFIIWVGLELSTLALVPILCSGFSPRNVEADNKYFLVQASSAALLLNGALGQAWLTGSWSILDPVNEVTSICLSIALAFKIGLAPVHFWFPDVLQGLPFFQGLIIATWQKIAPLILMFYFSQLGFSYLLITPSLISVLIGGWGGLNQTQVRKILAFSSIGNMGWLVITSAYSFNAAIIMLVIYLIINTSLFLLFDHLKVSTLGHLNTISQLSPISVALVLLVMLSLGGLPPLTGFILKFTSLYFLVANNFIILSSIMIIGNLQDYFFYLRISFNTSLFLFPQHIISSASWRNSTIISPLAPKAWLSSVSTVLSTLAIPLTLPLYIIT.

Transmembrane regions (helical) follow at residues 4–24 (IVST…VSSE), 26–46 (WFII…ILCS), 67–87 (AALL…WSIL), 96–116 (ICLS…FWFP), 124–144 (FFQG…LMFY), 148–168 (LGFS…GGWG), 177–197 (KILA…SAYS), 198–218 (FNAA…LFLL), 241–261 (VALV…TGFI), 264–284 (FTSL…IMII), 290–310 (YFFY…QHII), and 332–352 (SVST…YIIT).

This sequence belongs to the complex I subunit 2 family.

It localises to the mitochondrion inner membrane. The enzyme catalyses a ubiquinone + NADH + 5 H(+)(in) = a ubiquinol + NAD(+) + 4 H(+)(out). Core subunit of the mitochondrial membrane respiratory chain NADH dehydrogenase (Complex I) that is believed to belong to the minimal assembly required for catalysis. Complex I functions in the transfer of electrons from NADH to the respiratory chain. The immediate electron acceptor for the enzyme is believed to be ubiquinone. The protein is NADH-ubiquinone oxidoreductase chain 2 (ND2) of Strongylocentrotus purpuratus (Purple sea urchin).